A 122-amino-acid polypeptide reads, in one-letter code: Small ribosomal subunit protein uS13 (122 aa).

The segment at 94–122 is disordered; that stretch reads LSLPVRGQRTKTNSRTRKGKRKTVAGKKK. Basic residues predominate over residues 101–122; sequence QRTKTNSRTRKGKRKTVAGKKK.

It belongs to the universal ribosomal protein uS13 family. As to quaternary structure, part of the 30S ribosomal subunit. Forms a loose heterodimer with protein S19. Forms two bridges to the 50S subunit in the 70S ribosome.

In terms of biological role, located at the top of the head of the 30S subunit, it contacts several helices of the 16S rRNA. In the 70S ribosome it contacts the 23S rRNA (bridge B1a) and protein L5 of the 50S subunit (bridge B1b), connecting the 2 subunits; these bridges are implicated in subunit movement. Contacts the tRNAs in the A and P-sites. In Chlamydia trachomatis serovar A (strain ATCC VR-571B / DSM 19440 / HAR-13), this protein is Small ribosomal subunit protein uS13.